A 197-amino-acid chain; its full sequence is Ribonuclease HII (197 aa).

Positions 11–197 constitute an RNase H type-2 domain; the sequence is HLIAGVDEVG…FAPVKKILGL (187 aa). Residues aspartate 17, glutamate 18, and aspartate 109 each coordinate a divalent metal cation.

This sequence belongs to the RNase HII family. The cofactor is Mn(2+). It depends on Mg(2+) as a cofactor.

The protein localises to the cytoplasm. The catalysed reaction is Endonucleolytic cleavage to 5'-phosphomonoester.. In terms of biological role, endonuclease that specifically degrades the RNA of RNA-DNA hybrids. In Actinobacillus pleuropneumoniae serotype 5b (strain L20), this protein is Ribonuclease HII.